The primary structure comprises 147 residues: Large ribosomal subunit protein bL9 (147 aa).

Belongs to the bacterial ribosomal protein bL9 family.

Functionally, binds to the 23S rRNA. The polypeptide is Large ribosomal subunit protein bL9 (Thermoanaerobacter pseudethanolicus (strain ATCC 33223 / 39E) (Clostridium thermohydrosulfuricum)).